The chain runs to 288 residues: Large ribosomal subunit protein uL2 (288 aa).

2 disordered regions span residues 1–46 (MAIH…RNVY) and 226–288 (MVMN…RGKK). The span at 235 to 248 (NGGGQGKSKGGGGR) shows a compositional bias: gly residues. Residues 279–288 (HNGRKPRGKK) are compositionally biased toward basic residues.

The protein belongs to the universal ribosomal protein uL2 family. As to quaternary structure, part of the 50S ribosomal subunit. Forms a bridge to the 30S subunit in the 70S ribosome.

Functionally, one of the primary rRNA binding proteins. Required for association of the 30S and 50S subunits to form the 70S ribosome, for tRNA binding and peptide bond formation. It has been suggested to have peptidyltransferase activity; this is somewhat controversial. Makes several contacts with the 16S rRNA in the 70S ribosome. This chain is Large ribosomal subunit protein uL2, found in Opitutus terrae (strain DSM 11246 / JCM 15787 / PB90-1).